Consider the following 363-residue polypeptide: Ferrochelatase (363 aa).

2 residues coordinate Fe cation: H209 and E290.

Belongs to the ferrochelatase family.

It is found in the cytoplasm. The catalysed reaction is heme b + 2 H(+) = protoporphyrin IX + Fe(2+). It functions in the pathway porphyrin-containing compound metabolism; protoheme biosynthesis; protoheme from protoporphyrin-IX: step 1/1. Its function is as follows. Catalyzes the ferrous insertion into protoporphyrin IX. The sequence is that of Ferrochelatase from Azoarcus sp. (strain BH72).